The primary structure comprises 697 residues: Beta-galactosidase 17 (697 aa).

The N-terminal stretch at 1-35 (MAMTSWPSTGRQRRHQLASMLLLVLVVVGIYVPVF) is a signal peptide. The Proton donor role is filled by E218. E301 (nucleophile) is an active-site residue. 5 N-linked (GlcNAc...) asparagine glycosylation sites follow: N333, N519, N573, N583, and N690.

The protein belongs to the glycosyl hydrolase 35 family. As to expression, ubiquitous, with higher expression levels in roots and siliques.

The protein resides in the secreted. Its subcellular location is the extracellular space. It localises to the apoplast. The catalysed reaction is Hydrolysis of terminal non-reducing beta-D-galactose residues in beta-D-galactosides.. This Arabidopsis thaliana (Mouse-ear cress) protein is Beta-galactosidase 17 (BGAL17).